The following is a 225-amino-acid chain: Heptaprenylglyceryl phosphate synthase (225 aa).

A sn-glycerol 1-phosphate-binding site is contributed by Lys-6. Mg(2+) contacts are provided by Asp-8 and Thr-34. Sn-glycerol 1-phosphate contacts are provided by residues 153–158 (YVEYSG), Gly-183, and 203–204 (GN).

Belongs to the GGGP/HepGP synthase family. Group I subfamily. Homodimer. It depends on Mg(2+) as a cofactor.

It catalyses the reaction sn-glycerol 1-phosphate + all-trans-heptaprenyl diphosphate = 3-heptaprenyl-sn-glycero-1-phosphate + diphosphate. It functions in the pathway membrane lipid metabolism; glycerophospholipid metabolism. Functionally, prenyltransferase that catalyzes in vivo the transfer of the heptaprenyl moiety of heptaprenyl pyrophosphate (HepPP; 35 carbon atoms) to the C3 hydroxyl of sn-glycerol-1-phosphate (G1P), producing heptaprenylglyceryl phosphate (HepGP). This reaction is an ether-bond-formation step in the biosynthesis of archaea-type G1P-based membrane lipids found in Bacillales. This chain is Heptaprenylglyceryl phosphate synthase, found in Listeria monocytogenes serotype 4a (strain HCC23).